Consider the following 678-residue polypeptide: UvrABC system protein B (678 aa).

In terms of domain architecture, Helicase ATP-binding spans 31–417 (ENLNDGLAHQ…KSGTEIIDQV (387 aa)). Residue 44–51 (GVTGSGKT) participates in ATP binding. Residues 97–120 (YYDYYQPEAYVPSSDTFIEKDASI) carry the Beta-hairpin motif. Positions 436–602 (QVDDLLSEAR…GLNKKVGELL (167 aa)) constitute a Helicase C-terminal domain. Residues 603-625 (DIGQGGSNKSRNKPRSQKAAEPA) are disordered. The UVR domain maps to 638-673 (QQQIKKLEQQMYKFAQDLEFEKAAAIRDQLHKLREQ).

It belongs to the UvrB family. Forms a heterotetramer with UvrA during the search for lesions. Interacts with UvrC in an incision complex.

The protein localises to the cytoplasm. The UvrABC repair system catalyzes the recognition and processing of DNA lesions. A damage recognition complex composed of 2 UvrA and 2 UvrB subunits scans DNA for abnormalities. Upon binding of the UvrA(2)B(2) complex to a putative damaged site, the DNA wraps around one UvrB monomer. DNA wrap is dependent on ATP binding by UvrB and probably causes local melting of the DNA helix, facilitating insertion of UvrB beta-hairpin between the DNA strands. Then UvrB probes one DNA strand for the presence of a lesion. If a lesion is found the UvrA subunits dissociate and the UvrB-DNA preincision complex is formed. This complex is subsequently bound by UvrC and the second UvrB is released. If no lesion is found, the DNA wraps around the other UvrB subunit that will check the other stand for damage. The sequence is that of UvrABC system protein B from Mannheimia succiniciproducens (strain KCTC 0769BP / MBEL55E).